A 381-amino-acid polypeptide reads, in one-letter code: Bifunctional enzyme Fae/Hps (381 aa).

Residues 1–150 (MIKFGEAVLG…KEKYRALHPL (150 aa)) form a formaldehyde-activating enzyme region. Residues 151-381 (VGFRDVRLEY…DEDEDIGEEL (231 aa)) form a 3-hexulose-6-phosphate synthase region.

In the N-terminal section; belongs to the formaldehyde-activating enzyme family. The protein in the C-terminal section; belongs to the HPS/KGPDC family. HPS subfamily.

The catalysed reaction is 5,6,7,8-tetrahydromethanopterin + formaldehyde = 5,10-methylenetetrahydromethanopterin + H2O. It catalyses the reaction D-ribulose 5-phosphate + formaldehyde = D-arabino-hex-3-ulose 6-phosphate. It participates in carbohydrate biosynthesis; D-ribose 5-phosphate biosynthesis. Its function is as follows. Catalyzes the condensation of formaldehyde with tetrahydromethanopterin (H(4)MPT) to 5,10-methylenetetrahydromethanopterin. Catalyzes the reversible formation of ribulose-5-phosphate and formaldehyde from 3-hexulose-6-phosphate. This is Bifunctional enzyme Fae/Hps from Methanocaldococcus jannaschii (strain ATCC 43067 / DSM 2661 / JAL-1 / JCM 10045 / NBRC 100440) (Methanococcus jannaschii).